A 287-amino-acid polypeptide reads, in one-letter code: rRNA adenine N-6-methyltransferase (287 aa).

Positions 1-13 (MKKKNHKYRGKKL) are enriched in basic residues. Positions 1 to 21 (MKKKNHKYRGKKLNRGESPNF) are disordered. 6 residues coordinate S-adenosyl-L-methionine: His25, Met27, Gly52, Glu73, Asp98, and Asn114.

The protein belongs to the class I-like SAM-binding methyltransferase superfamily. rRNA adenine N(6)-methyltransferase family. In terms of assembly, homodimer.

In terms of biological role, involved in erythromycin resistance. The sequence is that of rRNA adenine N-6-methyltransferase (ermJ) from Bacillus anthracis.